The chain runs to 84 residues: Molybdopterin synthase sulfur carrier subunit (84 aa).

Position 84 is a 1-thioglycine; alternate (G84). Glycyl adenylate; alternate is present on G84.

Belongs to the MoaD family. MOCS2A subfamily. As to quaternary structure, heterotetramer; composed of 2 small (MOCS2A) and 2 large (MOCS2B) subunits. C-terminal thiocarboxylation occurs in 2 steps, it is first acyl-adenylated (-COAMP) via the hesA/moeB/thiF part of MOCS3, then thiocarboxylated (-COSH) via the rhodanese domain of MOCS3.

It localises to the cytoplasm. Its pathway is cofactor biosynthesis; molybdopterin biosynthesis. Its function is as follows. Acts as a sulfur carrier required for molybdopterin biosynthesis. Component of the molybdopterin synthase complex that catalyzes the conversion of precursor Z into molybdopterin by mediating the incorporation of 2 sulfur atoms into precursor Z to generate a dithiolene group. In the complex, serves as sulfur donor by being thiocarboxylated (-COSH) at its C-terminus by MOCS3. After interaction with MOCS2B, the sulfur is then transferred to precursor Z to form molybdopterin. This chain is Molybdopterin synthase sulfur carrier subunit, found in Caenorhabditis elegans.